A 527-amino-acid chain; its full sequence is Amine oxidase [flavin-containing] A (527 aa).

Methionine 1 bears the N-acetylmethionine mark. Topologically, residues 1–497 (MENQEKASIA…HTFWERNLPS (497 aa)) are cytoplasmic. Serine 383 carries the post-translational modification Phosphoserine. The residue at position 406 (cysteine 406) is an S-8alpha-FAD cysteine. The chain crosses the membrane as a helical; Anchor for type IV membrane protein span at residues 498 to 518 (VSGLLKIIGFSTSVTALGFVL). Residues 519–527 (YKYKLLPRS) are Mitochondrial intermembrane-facing. The interval 520-522 (KYK) is interaction with membrane phospholipid headgroups.

This sequence belongs to the flavin monoamine oxidase family. In terms of assembly, monomer, homo- or heterodimer (containing two subunits of similar size). Each subunit contains a covalently bound flavin. Enzymatically active as monomer. Requires FAD as cofactor.

The protein resides in the mitochondrion outer membrane. The enzyme catalyses a secondary aliphatic amine + O2 + H2O = a primary amine + an aldehyde + H2O2. The catalysed reaction is a primary methyl amine + O2 + H2O = an aldehyde + H2O2 + NH4(+). It catalyses the reaction (R)-adrenaline + O2 + H2O = (R)-3,4-dihydroxymandelaldehyde + methylamine + H2O2. It carries out the reaction dopamine + O2 + H2O = 3,4-dihydroxyphenylacetaldehyde + H2O2 + NH4(+). The enzyme catalyses tyramine + O2 + H2O = (4-hydroxyphenyl)acetaldehyde + H2O2 + NH4(+). The catalysed reaction is (R)-noradrenaline + O2 + H2O = (R)-3,4-dihydroxymandelaldehyde + H2O2 + NH4(+). It catalyses the reaction serotonin + O2 + H2O = (5-hydroxyindol-3-yl)acetaldehyde + H2O2 + NH4(+). It carries out the reaction kynuramine + O2 + H2O = 3-(2-aminophenyl)-3-oxopropanal + H2O2 + NH4(+). The enzyme catalyses tryptamine + O2 + H2O = indole-3-acetaldehyde + H2O2 + NH4(+). The catalysed reaction is 2-phenylethylamine + O2 + H2O = 2-phenylacetaldehyde + H2O2 + NH4(+). Catalyzes the oxidative deamination of primary and some secondary amine such as neurotransmitters, with concomitant reduction of oxygen to hydrogen peroxide and has important functions in the metabolism of neuroactive and vasoactive amines in the central nervous system and peripheral tissues. Preferentially oxidizes serotonin. Also catalyzes the oxidative deamination of kynuramine to 3-(2-aminophenyl)-3-oxopropanal that can spontaneously condense to 4-hydroxyquinoline. This chain is Amine oxidase [flavin-containing] A, found in Pongo abelii (Sumatran orangutan).